The sequence spans 542 residues: Retron Ec83 probable ATPase (542 aa).

Positions 92 to 99 (GNNGCGKS) match the ATP-binding motif.

Functionally, probable ATPase component of antiviral defense system retron Ec83, composed of a non-coding RNA (ncRNA), a reverse transcriptase (RT), this protein and a putative HNH endonuclease. Expression of retron Ec83 confers protection against bacteriophage T2, T4 and T6. At multiplicity of infection (MOI) of 0.02 cultures slow growth when infected with T4 but do not collapse, at MOI 2 cultures enter growth stasis. This Escherichia coli protein is Retron Ec83 probable ATPase.